We begin with the raw amino-acid sequence, 317 residues long: AT-hook motif nuclear-localized protein 22 (317 aa).

Disordered stretches follow at residues 22-41 (HHQF…HDID) and 48-106 (LKRD…KPPI). Residues 26 to 35 (QHQQQQQQQN) show a composition bias toward low complexity. The span at 48 to 64 (LKRDRDADIDPNEHSSA) shows a compositional bias: basic and acidic residues. The span at 72-84 (GSGGESGGGGGGD) shows a compositional bias: gly residues. A DNA-binding region (a.T hook) is located at residues 89–101 (RRPRGRPAGSKNK). Residues 113-253 (ANALKSHVME…EDDQEEQTAG (141 aa)) form the PPC domain. Positions 258–285 (NIDGNATMGGGTQTQTQTQQQQQQQLMQ) are disordered. Residues 270-282 (QTQTQTQQQQQQQ) are compositionally biased toward low complexity.

Homodimer. Interacts with HDA1/HDA19, HDA6 and HDA9. In terms of tissue distribution, expressed at the hypocotyl-root transition zone and the root hair zone. Also detected in the inflorescence.

The protein localises to the nucleus. Transcription factor that specifically binds AT-rich DNA sequences related to the nuclear matrix attachment regions (MARs). Binds an AT-rich DNA sequences in the FLOWERING LOCUS T (FT) promoter. Acts redundantly with AHL18, AHL27 and AHL29 in the regulation of flowering and regulation of the hypocotyl elongation. Plays a role in both photo- and skotomorphogenesis. Acts as a chromatin remodeling factor that modifies the architecture of FLOWERING LOCUS T (FT) chromatin by modulating both H3 acetylation and methylation leading to the regulation of FT expression during flowering induction. The polypeptide is AT-hook motif nuclear-localized protein 22 (Arabidopsis thaliana (Mouse-ear cress)).